The primary structure comprises 296 residues: uncharacterized protein (296 aa).

The stretch at 129 to 170 forms a coiled coil; it reads VKELKDLIRTVADEHMKMKREHEAAMKELTLLINNQKQQQQQ. The segment at 165 to 187 is disordered; sequence KQQQQQPVPMPRNSTATRPKNLA.

This is an uncharacterized protein from Ostreid herpesvirus 1 (isolate France) (OsHV-1).